We begin with the raw amino-acid sequence, 634 residues long: MGLLDGISHLTDLRALTPDQLDELAAELRDLIVSTVSRTGGHLAPNLGVVELTLALHYVFRAPDDRIVWDVGHQCYVHKILTGRKSQFHTLRQFEGLSGFPNRNESEYDCFGTGHSSTSISAALGMALARDLSGEDRNVVAVIGDGALSGGMAFEALNQAGHLGCRLIVVLNDNEMSIARNVGAMARYLSRLRTDPMYSRSKDEVESLLRRIPAIGPRVLGWIERIKDSLKYLVVAGMLFEELGFTYLGPIDGHNIPAMLNVFRQAQAVEGPVLVHVLTKKGKGYAPAEKNPDKFHGVGPFDPATGNTPTDARVSFTEVFGRTLVQLAEADSRILAITAAMTSGTGLGPFSRRFPQRFFDVGIAEQHAVTLAAGLAVEGYRPVVAIYSTFLQRAYDQVLHDVCLQKLPVVFALDRGGIVGEDGVTHQGVFDFSFLRPVPNLVMMAPKDENEFQHMLKTAVEHEGPIAVRYPRGTGTGCALDQDLVALPIGRAEVLREGDDITLIAIGNMVPTAVKAAEILAERGIEASVVNARFVKPLDEKCICHYARRTGRLITLEENVIAGGFGSAVQELLVAKGLTDVRVQLIGLPDVFIEHGAPHLLRAKYGLTVDRVVRTAESEKRKRARLKLAPRLLR.

Thiamine diphosphate is bound by residues H73 and 114–116; that span reads GHS. Residue D145 participates in Mg(2+) binding. Thiamine diphosphate is bound by residues 146 to 147, N174, Y285, and E365; that span reads GA. N174 contributes to the Mg(2+) binding site.

The protein belongs to the transketolase family. DXPS subfamily. As to quaternary structure, homodimer. Mg(2+) is required as a cofactor. Thiamine diphosphate serves as cofactor.

It catalyses the reaction D-glyceraldehyde 3-phosphate + pyruvate + H(+) = 1-deoxy-D-xylulose 5-phosphate + CO2. It functions in the pathway metabolic intermediate biosynthesis; 1-deoxy-D-xylulose 5-phosphate biosynthesis; 1-deoxy-D-xylulose 5-phosphate from D-glyceraldehyde 3-phosphate and pyruvate: step 1/1. Catalyzes the acyloin condensation reaction between C atoms 2 and 3 of pyruvate and glyceraldehyde 3-phosphate to yield 1-deoxy-D-xylulose-5-phosphate (DXP). In Desulforudis audaxviator (strain MP104C), this protein is 1-deoxy-D-xylulose-5-phosphate synthase.